Reading from the N-terminus, the 404-residue chain is Argininosuccinate synthase (404 aa).

ATP-binding positions include Ala-10–Ser-18 and Ala-38. Position 89 (Tyr-89) interacts with L-citrulline. Residue Gly-119 coordinates ATP. L-aspartate-binding residues include Thr-121, Asn-125, and Asp-126. L-citrulline is bound at residue Asn-125. The L-citrulline site is built by Arg-129, Ser-177, Ser-186, Glu-262, and Tyr-274.

It belongs to the argininosuccinate synthase family. Type 1 subfamily. Homotetramer.

The protein resides in the cytoplasm. The catalysed reaction is L-citrulline + L-aspartate + ATP = 2-(N(omega)-L-arginino)succinate + AMP + diphosphate + H(+). It functions in the pathway amino-acid biosynthesis; L-arginine biosynthesis; L-arginine from L-ornithine and carbamoyl phosphate: step 2/3. The protein is Argininosuccinate synthase of Prochlorococcus marinus (strain MIT 9215).